We begin with the raw amino-acid sequence, 207 residues long: Ribosomal RNA small subunit methyltransferase G (207 aa).

S-adenosyl-L-methionine contacts are provided by residues G73, L78, V124–E125, and R139.

This sequence belongs to the methyltransferase superfamily. RNA methyltransferase RsmG family.

It is found in the cytoplasm. The enzyme catalyses guanosine(527) in 16S rRNA + S-adenosyl-L-methionine = N(7)-methylguanosine(527) in 16S rRNA + S-adenosyl-L-homocysteine. In terms of biological role, specifically methylates the N7 position of guanine in position 527 of 16S rRNA. The protein is Ribosomal RNA small subunit methyltransferase G of Salmonella agona (strain SL483).